Reading from the N-terminus, the 266-residue chain is Protein SCO2 homolog, mitochondrial (266 aa).

Residues 1-41 (MLLLARPPKAWHRLFQLQPLALLGTPGGKTQHVRYQLFSTP) constitute a mitochondrion transit peptide. Topologically, residues 42 to 60 (GPADTGRQGQPQGPGLRTR) are mitochondrial matrix. The helical transmembrane segment at 61–78 (LLVTALVGAGLGGAWLAL) threads the bilayer. The Mitochondrial intermembrane segment spans residues 79–266 (RAEKERGRQQ…HMAAFRSVLR (188 aa)). Positions 85-259 (GRQQQRTEAL…ITDSVRRHMA (175 aa)) constitute a Thioredoxin domain. The Cu cation site is built by Cys-133, Cys-137, and His-224. A disulfide bond links Cys-133 and Cys-137.

This sequence belongs to the SCO1/2 family. As to quaternary structure, homodimer. Interacts with COA6. Found in a complex with TMEM177, COX20, COA6, MT-CO2/COX2, COX18 and SCO1. Interacts with TMEM177 in a COX20-dependent manner. Interacts with COX20 in a MT-CO2/COX2- and COX18-dependent manner. Interacts with COX16.

Its subcellular location is the mitochondrion inner membrane. Its function is as follows. Copper metallochaperone essential for the synthesis and maturation of cytochrome c oxidase subunit II (MT-CO2/COX2) by facilitating the incorporation of copper into the Cu(A) site of MT-CO2/COX2. Could also act as a thiol-disulfide oxidoreductase to regulate the redox state of the cysteines in SCO1 during maturation of MT-CO2/COX2. This Bos taurus (Bovine) protein is Protein SCO2 homolog, mitochondrial (SCO2).